A 358-amino-acid polypeptide reads, in one-letter code: Phosphoserine aminotransferase (358 aa).

R41 serves as a coordination point for L-glutamate. Pyridoxal 5'-phosphate is bound by residues 75–76 (AS), W100, T148, D167, and Q190. K191 carries the N6-(pyridoxal phosphate)lysine modification. Residue 233–234 (NT) participates in pyridoxal 5'-phosphate binding.

The protein belongs to the class-V pyridoxal-phosphate-dependent aminotransferase family. SerC subfamily. Homodimer. The cofactor is pyridoxal 5'-phosphate.

It localises to the cytoplasm. It carries out the reaction O-phospho-L-serine + 2-oxoglutarate = 3-phosphooxypyruvate + L-glutamate. The enzyme catalyses 4-(phosphooxy)-L-threonine + 2-oxoglutarate = (R)-3-hydroxy-2-oxo-4-phosphooxybutanoate + L-glutamate. The protein operates within amino-acid biosynthesis; L-serine biosynthesis; L-serine from 3-phospho-D-glycerate: step 2/3. It participates in cofactor biosynthesis; pyridoxine 5'-phosphate biosynthesis; pyridoxine 5'-phosphate from D-erythrose 4-phosphate: step 3/5. Functionally, catalyzes the reversible conversion of 3-phosphohydroxypyruvate to phosphoserine and of 3-hydroxy-2-oxo-4-phosphonooxybutanoate to phosphohydroxythreonine. This Campylobacter jejuni subsp. doylei (strain ATCC BAA-1458 / RM4099 / 269.97) protein is Phosphoserine aminotransferase.